Reading from the N-terminus, the 352-residue chain is C-C chemokine receptor type 5 (352 aa).

Residues methionine 1–alanine 30 are Extracellular-facing. Residue tyrosine 3 is modified to Sulfotyrosine. Residues serine 6 and serine 7 are each glycosylated (O-linked (GalNAc...) serine). Residues tyrosine 10, tyrosine 14, and tyrosine 15 each carry the sulfotyrosine modification. 2 disulfide bridges follow: cysteine 20–cysteine 269 and cysteine 101–cysteine 178. Residues arginine 31–cysteine 58 traverse the membrane as a helical segment. The Cytoplasmic portion of the chain corresponds to lysine 59–tyrosine 68. The helical transmembrane segment at leucine 69–tyrosine 89 threads the bilayer. The Extracellular segment spans residues alanine 90–glutamine 102. The chain crosses the membrane as a helical span at residues leucine 103–isoleucine 124. At aspartate 125–threonine 141 the chain is on the cytoplasmic side. A helical membrane pass occupies residues valine 142 to phenylalanine 166. Over threonine 167–isoleucine 198 the chain is Extracellular. The chain crosses the membrane as a helical span at residues valine 199 to leucine 218. Topologically, residues lysine 219–arginine 235 are cytoplasmic. Residues leucine 236–phenylalanine 260 form a helical membrane-spanning segment. Residues glutamine 261–glutamine 277 are Extracellular-facing. The chain crosses the membrane as a helical span at residues alanine 278–glycine 301. Over glutamate 302 to leucine 352 the chain is Cytoplasmic. S-palmitoyl cysteine attachment occurs at residues cysteine 321, cysteine 323, and cysteine 324. Serine 336, serine 337, serine 342, and serine 349 each carry phosphoserine; by BARK1.

Belongs to the G-protein coupled receptor 1 family. As to quaternary structure, interacts with PRAF2. Efficient ligand binding to CCL3/MIP-1alpha and CCL4/MIP-1beta requires sulfation, O-glycosylation and sialic acid modifications. Glycosylation on Ser-6 is required for efficient binding of CCL4. Interacts with GRK2. Interacts with ARRB1 and ARRB2. Interacts with CNIH4. Interacts with S100A4; this interaction stimulates T-lymphocyte chemotaxis. Post-translationally, sulfated on at least 2 of the N-terminal tyrosines. Sulfation is required for efficient binding of the chemokines, CCL3 and CCL4. In terms of processing, palmitoylation in the C-terminal is important for cell surface expression. Phosphorylation on serine residues in the C-terminal is stimulated by binding CC chemokines especially by APO-RANTES. Post-translationally, O-glycosylated, but not N-glycosylated. Ser-6 appears to be the major site even if Ser-7 may be also O-glycosylated. Also sialylated glycans present which contribute to chemokine binding. Thr-16 and Ser-17 may also be glycosylated and, if so, with small moieties such as a T-antigen.

It localises to the cell membrane. Receptor for a number of inflammatory CC-chemokines including CCL3/MIP-1-alpha, CCL4/MIP-1-beta and RANTES and subsequently transduces a signal by increasing the intracellular calcium ion level. May play a role in the control of granulocytic lineage proliferation or differentiation. Participates in T-lymphocyte migration to the infection site by acting as a chemotactic receptor. This chain is C-C chemokine receptor type 5 (CCR5), found in Trachypithecus francoisi (Francois' leaf monkey).